A 141-amino-acid polypeptide reads, in one-letter code: Photosystem I reaction center subunit IV A, chloroplastic (141 aa).

The N-terminal 49 residues, 1-49 (MASCNMASAASNFLVATPNVASNTNTSRTTMLFFSSKNYGSTAPRLVVR), are a transit peptide targeting the chloroplast. Low complexity predominate over residues 57–73 (PAAAATAEPAEAPVKAA). Residues 57–83 (PAAAATAEPAEAPVKAAKPPPIGPKRG) are disordered.

The protein belongs to the PsaE family. 2 isoforms exists (ratio 1:1). With or without the N-terminal alanine.

It localises to the plastid. The protein localises to the chloroplast thylakoid membrane. Functionally, stabilizes the interaction between PsaC and the PSI core, assists the docking of the ferredoxin to PSI and interacts with ferredoxin-NADP oxidoreductase. In Nicotiana sylvestris (Wood tobacco), this protein is Photosystem I reaction center subunit IV A, chloroplastic (PSAEA).